We begin with the raw amino-acid sequence, 270 residues long: Very long chain fatty acid elongase 3 (270 aa).

N6 carries N-linked (GlcNAc...) asparagine glycosylation. Helical transmembrane passes span 29–49 (FFEE…VLIA) and 63–83 (LQGP…LGAV). N110 is a glycosylation site (N-linked (GlcNAc...) asparagine). Transmembrane regions (helical) follow at residues 115–135 (FWSW…AFII), 140–160 (PLIF…SFGY), 164–184 (VPAG…MYTY), 198–218 (LPML…IVSI), and 235–255 (HLFW…HFFC). The Di-lysine motif signature appears at 266–270 (KTKSQ).

This sequence belongs to the ELO family. ELOVL3 subfamily. Interacts with TECR. Post-translationally, N-Glycosylated. As to expression, testis.

Its subcellular location is the endoplasmic reticulum membrane. It catalyses the reaction a very-long-chain acyl-CoA + malonyl-CoA + H(+) = a very-long-chain 3-oxoacyl-CoA + CO2 + CoA. It carries out the reaction eicosanoyl-CoA + malonyl-CoA + H(+) = 3-oxodocosanoyl-CoA + CO2 + CoA. The enzyme catalyses hexadecanoyl-CoA + malonyl-CoA + H(+) = 3-oxooctadecanoyl-CoA + CO2 + CoA. The catalysed reaction is octadecanoyl-CoA + malonyl-CoA + H(+) = 3-oxoeicosanoyl-CoA + CO2 + CoA. It catalyses the reaction (9Z)-octadecenoyl-CoA + malonyl-CoA + H(+) = 3-oxo-(11Z)-eicosenoyl-CoA + CO2 + CoA. It carries out the reaction (9Z,12Z)-octadecadienoyl-CoA + malonyl-CoA + H(+) = (11Z,14Z)-3-oxoicosa-11,14-dienoyl-CoA + CO2 + CoA. The enzyme catalyses (9Z,12Z,15Z)-octadecatrienoyl-CoA + malonyl-CoA + H(+) = (11Z,14Z,17Z)-3-oxoeicosatrienoyl-CoA + CO2 + CoA. The catalysed reaction is docosanoyl-CoA + malonyl-CoA + H(+) = 3-oxotetracosanoyl-CoA + CO2 + CoA. It catalyses the reaction tetradecanoyl-CoA + malonyl-CoA + H(+) = 3-oxohexadecanoyl-CoA + CO2 + CoA. Its pathway is lipid metabolism; polyunsaturated fatty acid biosynthesis. Functionally, catalyzes the first and rate-limiting reaction of the four reactions that constitute the long-chain fatty acids elongation cycle. This endoplasmic reticulum-bound enzymatic process allows the addition of 2 carbons to the chain of long- and very long-chain fatty acids (VLCFAs) per cycle. Condensing enzyme that exhibits activity toward saturated and unsaturated acyl-CoA substrates with higher activity toward C18 acyl-CoAs, especially C18:0 acyl-CoAs. May participate in the production of saturated and monounsaturated VLCFAs of different chain lengths that are involved in multiple biological processes as precursors of membrane lipids and lipid mediators. The sequence is that of Very long chain fatty acid elongase 3 from Homo sapiens (Human).